The primary structure comprises 629 residues: Probable indole-3-acetic acid-amido synthetase GH3.4 (629 aa).

It belongs to the IAA-amido conjugating enzyme family. In terms of tissue distribution, expressed in flowers.

In terms of biological role, may catalyze the synthesis of indole-3-acetic acid (IAA)-amino acid conjugates, providing a mechanism for the plant to cope with the presence of excess auxin. The protein is Probable indole-3-acetic acid-amido synthetase GH3.4 (GH3.4) of Oryza sativa subsp. japonica (Rice).